The sequence spans 242 residues: Type III pantothenate kinase (242 aa).

7 to 14 (DLGNSRFK) serves as a coordination point for ATP. Substrate-binding positions include Y91 and 98–101 (GVDR). D100 serves as the catalytic Proton acceptor. T121 contributes to the ATP binding site. T171 is a substrate binding site.

The protein belongs to the type III pantothenate kinase family. In terms of assembly, homodimer. The cofactor is NH4(+). K(+) serves as cofactor.

The protein localises to the cytoplasm. It carries out the reaction (R)-pantothenate + ATP = (R)-4'-phosphopantothenate + ADP + H(+). It functions in the pathway cofactor biosynthesis; coenzyme A biosynthesis; CoA from (R)-pantothenate: step 1/5. In terms of biological role, catalyzes the phosphorylation of pantothenate (Pan), the first step in CoA biosynthesis. The polypeptide is Type III pantothenate kinase (Xylella fastidiosa (strain 9a5c)).